Here is a 316-residue protein sequence, read N- to C-terminus: Acetylglutamate kinase (316 aa).

Substrate contacts are provided by residues Gly76 to Gly77, Arg98, and Asn207.

It belongs to the acetylglutamate kinase family. ArgB subfamily.

Its subcellular location is the cytoplasm. The catalysed reaction is N-acetyl-L-glutamate + ATP = N-acetyl-L-glutamyl 5-phosphate + ADP. The protein operates within amino-acid biosynthesis; L-arginine biosynthesis; N(2)-acetyl-L-ornithine from L-glutamate: step 2/4. Its function is as follows. Catalyzes the ATP-dependent phosphorylation of N-acetyl-L-glutamate. In Paenarthrobacter aurescens (strain TC1), this protein is Acetylglutamate kinase.